The following is a 20-amino-acid chain: Dihydroorotase-like protein (20 aa).

Belongs to the metallo-dependent hydrolases superfamily. DHOase family. PyrC' subfamily. In terms of assembly, heterododecamer of 6 active PyrB subunits and 6 non-catalytic PyrC' subunits.

Functionally, non-functional DHOase. The chain is Dihydroorotase-like protein (pyrC') from Pseudomonas fluorescens biotype A.